Here is a 62-residue protein sequence, read N- to C-terminus: uncharacterized protein (62 aa).

Residues 37-57 (FILGVILLGVIIESITLLVVY) traverse the membrane as a helical segment.

Its subcellular location is the membrane. This is an uncharacterized protein from Dictyostelium discoideum (Social amoeba).